The following is a 50-amino-acid chain: Large ribosomal subunit protein eL39 (50 aa).

This sequence belongs to the eukaryotic ribosomal protein eL39 family.

This is Large ribosomal subunit protein eL39 (rpl39e) from Archaeoglobus fulgidus (strain ATCC 49558 / DSM 4304 / JCM 9628 / NBRC 100126 / VC-16).